A 453-amino-acid polypeptide reads, in one-letter code: Ribulose bisphosphate carboxylase large chain (453 aa).

Residues 1–2 (MS) constitute a propeptide that is removed on maturation. An N-acetylproline modification is found at Pro3. The residue at position 14 (Lys14) is an N6,N6,N6-trimethyllysine. 2 residues coordinate substrate: Asn123 and Thr173. The active-site Proton acceptor is the Lys175. Lys177 contacts substrate. Positions 201, 203, and 204 each coordinate Mg(2+). Lys201 bears the N6-carboxylysine mark. His294 (proton acceptor) is an active-site residue. Residues Arg295, His327, and Ser379 each coordinate substrate.

Belongs to the RuBisCO large chain family. Type I subfamily. Heterohexadecamer of 8 large chains and 8 small chains; disulfide-linked. The disulfide link is formed within the large subunit homodimers. It depends on Mg(2+) as a cofactor. The disulfide bond which can form in the large chain dimeric partners within the hexadecamer appears to be associated with oxidative stress and protein turnover.

It localises to the plastid. The protein resides in the chloroplast. It catalyses the reaction 2 (2R)-3-phosphoglycerate + 2 H(+) = D-ribulose 1,5-bisphosphate + CO2 + H2O. It carries out the reaction D-ribulose 1,5-bisphosphate + O2 = 2-phosphoglycolate + (2R)-3-phosphoglycerate + 2 H(+). In terms of biological role, ruBisCO catalyzes two reactions: the carboxylation of D-ribulose 1,5-bisphosphate, the primary event in carbon dioxide fixation, as well as the oxidative fragmentation of the pentose substrate in the photorespiration process. Both reactions occur simultaneously and in competition at the same active site. In Galium elongatum (Great marsh bedstraw), this protein is Ribulose bisphosphate carboxylase large chain.